Here is a 353-residue protein sequence, read N- to C-terminus: Photosystem II protein D1 (353 aa).

Residue Thr2 is modified to N-acetylthreonine. Position 2 is a phosphothreonine (Thr2). 3 helical membrane passes run 29–46 (YIGW…TATS), 118–133 (HFLL…EWEL), and 142–156 (WIAV…AAAA). Chlorophyll a is bound at residue His118. Tyr126 contacts pheophytin a. [CaMn4O5] cluster is bound by residues Asp170 and Glu189. A helical transmembrane segment spans residues 197–218 (FHMLGVAGVFGGSLFSAMHGSL). His198 provides a ligand contact to chlorophyll a. Residues His215 and 264–265 (SF) each bind a quinone. His215 is a Fe cation binding site. A Fe cation-binding site is contributed by His272. The chain crosses the membrane as a helical span at residues 274–288 (FLAAWPVVGIWFTAL). His332, Glu333, Asp342, and Ala344 together coordinate [CaMn4O5] cluster. The propeptide occupies 345-353 (AVEAPSTNG).

The protein belongs to the reaction center PufL/M/PsbA/D family. PSII is composed of 1 copy each of membrane proteins PsbA, PsbB, PsbC, PsbD, PsbE, PsbF, PsbH, PsbI, PsbJ, PsbK, PsbL, PsbM, PsbT, PsbX, PsbY, PsbZ, Psb30/Ycf12, at least 3 peripheral proteins of the oxygen-evolving complex and a large number of cofactors. It forms dimeric complexes. Requires The D1/D2 heterodimer binds P680, chlorophylls that are the primary electron donor of PSII, and subsequent electron acceptors. It shares a non-heme iron and each subunit binds pheophytin, quinone, additional chlorophylls, carotenoids and lipids. D1 provides most of the ligands for the Mn4-Ca-O5 cluster of the oxygen-evolving complex (OEC). There is also a Cl(-1) ion associated with D1 and D2, which is required for oxygen evolution. The PSII complex binds additional chlorophylls, carotenoids and specific lipids. as cofactor. In terms of processing, tyr-161 forms a radical intermediate that is referred to as redox-active TyrZ, YZ or Y-Z. C-terminally processed by CTPA; processing is essential to allow assembly of the oxygen-evolving complex and thus photosynthetic growth.

The protein resides in the plastid. Its subcellular location is the chloroplast thylakoid membrane. The enzyme catalyses 2 a plastoquinone + 4 hnu + 2 H2O = 2 a plastoquinol + O2. Photosystem II (PSII) is a light-driven water:plastoquinone oxidoreductase that uses light energy to abstract electrons from H(2)O, generating O(2) and a proton gradient subsequently used for ATP formation. It consists of a core antenna complex that captures photons, and an electron transfer chain that converts photonic excitation into a charge separation. The D1/D2 (PsbA/PsbD) reaction center heterodimer binds P680, the primary electron donor of PSII as well as several subsequent electron acceptors. The polypeptide is Photosystem II protein D1 (Nandina domestica (Heavenly bamboo)).